Reading from the N-terminus, the 562-residue chain is Isochorismate synthase 2, chloroplastic (562 aa).

A chloroplast-targeting transit peptide spans 1-55; sequence MASLQCSFHFLGTNPKKYNPSSIFQSYSRTSFTKLSSRVSRQRFLRCTLSMNGCE.

Belongs to the isochorismate synthase family. It depends on Mg(2+) as a cofactor.

The protein resides in the plastid. It localises to the chloroplast. The catalysed reaction is chorismate = isochorismate. The protein operates within siderophore biosynthesis; salicylate biosynthesis. Isochorismate synthase involved in the synthesis of salicylic acid (SA) required for both local and systemic acquired resistance (LAR and SAR) while SA synthesized through the phenylalanine ammonium lyase (PAL) pathway seems to potentiate plant cell death. Also involved in phylloquinone (vitamin K1) synthesis. Has no isochorismate pyruvate lyase (IPL) activity. This Arabidopsis thaliana (Mouse-ear cress) protein is Isochorismate synthase 2, chloroplastic (ICS2).